The following is a 227-amino-acid chain: Translation initiation factor 6 (227 aa).

The protein belongs to the eIF-6 family.

Its function is as follows. Binds to the 50S ribosomal subunit and prevents its association with the 30S ribosomal subunit to form the 70S initiation complex. The chain is Translation initiation factor 6 from Methanococcus aeolicus (strain ATCC BAA-1280 / DSM 17508 / OCM 812 / Nankai-3).